Here is a 389-residue protein sequence, read N- to C-terminus: Chalcone synthase 5 (389 aa).

Cys-164 is a catalytic residue.

It belongs to the thiolase-like superfamily. Chalcone/stilbene synthases family.

It catalyses the reaction (E)-4-coumaroyl-CoA + 3 malonyl-CoA + 3 H(+) = 2',4,4',6'-tetrahydroxychalcone + 3 CO2 + 4 CoA. The protein operates within secondary metabolite biosynthesis; flavonoid biosynthesis. Its function is as follows. The primary product of this enzyme is 4,2',4',6'-tetrahydroxychalcone (also termed naringenin-chalcone or chalcone) which can under specific conditions spontaneously isomerize into naringenin. The polypeptide is Chalcone synthase 5 (CHS5) (Trifolium subterraneum (Subterranean clover)).